The primary structure comprises 316 residues: Olfactory receptor 2H1 (316 aa).

Over 1–23 (MVNQSSPMGFLLLGFSEHPALER) the chain is Extracellular. Asn3 carries an N-linked (GlcNAc...) asparagine glycan. The helical transmembrane segment at 24 to 47 (TLFVVVFTSYLLTLVGNTLIILLS) threads the bilayer. The Cytoplasmic portion of the chain corresponds to 48–55 (VLYPRLHS). Residues 56-77 (PMYFFLSDLSFLDLCFTTSCVP) form a helical membrane-spanning segment. The Extracellular portion of the chain corresponds to 78–98 (QMLVNLWGPKKTISFLGCSVQ). Cys95 and Cys187 are oxidised to a cystine. A helical transmembrane segment spans residues 99 to 118 (LFIFLSLGTTECILLTVMAF). Residues 119 to 137 (DRYVAVCQPLHYATIIHPR) lie on the Cytoplasmic side of the membrane. A helical membrane pass occupies residues 138 to 156 (LCWQLASVAWVMSLVQSIV). Over 157–193 (QTPSTLHLPFCPHQQIDDFLCEVPSLIRLSCGDTSYN) the chain is Extracellular. The chain crosses the membrane as a helical span at residues 194 to 217 (EIQLAVSSVIFVVVPLSLILASYG). The Cytoplasmic segment spans residues 218–234 (ATAQAVLRINSATAWRK). A helical transmembrane segment spans residues 235-257 (AFGTCSSHLTVVTLFYSSVIAVY). Over 258-270 (LQPKNPYAQGRGK) the chain is Extracellular. A helical membrane pass occupies residues 271 to 290 (FFGLFYAVGTPSLNPLVYTL). Residues 291-316 (RNKEIKRALRRLLGKERDSRESWRAA) lie on the Cytoplasmic side of the membrane.

This sequence belongs to the G-protein coupled receptor 1 family.

It localises to the cell membrane. Odorant receptor. This is Olfactory receptor 2H1 (OR2H1) from Homo sapiens (Human).